The following is a 519-amino-acid chain: T-box transcription factor TBX5 (519 aa).

The disordered stretch occupies residues 1–46; sequence MADTEEAYGMPDTPVEAEPKELQCEPKQDNQLGASSKTPTSPPAAF. Residues 17–28 are compositionally biased toward basic and acidic residues; the sequence is AEPKELQCEPKQ. The segment covering 29–39 has biased composition (polar residues); it reads DNQLGASSKTP. Positions 63–238 form a DNA-binding region, T-box; sequence LWLKFHEVGT…NNPFAKGFRG (176 aa). Disordered stretches follow at residues 254–282, 293–312, and 326–372; these read EYPV…RNIT, CENG…SAYT, and KRKV…TSFR. Over residues 262–282 the composition is skewed to polar residues; it reads TVRQKVSSNHSPFSQETRNIT. Positions 298–309 are enriched in low complexity; sequence SSTSQDLLPSSS. A compositionally biased stretch (basic and acidic residues) spans 328–342; sequence KVSEEPAEHSYKKPY.

As to quaternary structure, monomer. Homodimer (via the T-box); binds DNA as homodimer.

The protein resides in the nucleus. It localises to the cytoplasm. In terms of biological role, DNA-binding protein that regulates the transcription of several genes and is involved in heart development and limb pattern formation. May bind to the core DNA motif of promoters. This is T-box transcription factor TBX5 (tbx5) from Xenopus laevis (African clawed frog).